The following is a 156-amino-acid chain: Ribosome maturation factor RimP (156 aa).

This sequence belongs to the RimP family.

Its subcellular location is the cytoplasm. In terms of biological role, required for maturation of 30S ribosomal subunits. The polypeptide is Ribosome maturation factor RimP (Gloeobacter violaceus (strain ATCC 29082 / PCC 7421)).